The chain runs to 205 residues: Ephrin-A1 (205 aa).

The first 18 residues, 1–18 (MEFLWAPLLGLCCSLAAA), serve as a signal peptide directing secretion. The 133-residue stretch at 19–151 (DRHTVFWNSS…RLKVTVSGKI (133 aa)) folds into the Ephrin RBD domain. Asparagine 26 carries an N-linked (GlcNAc...) asparagine glycan. Disulfide bonds link cysteine 51–cysteine 92 and cysteine 80–cysteine 140. Residue serine 182 is the site of GPI-anchor amidated serine attachment. Positions 183–205 (AAPRLFPLAWTVLLLPLLLLQTP) are cleaved as a propeptide — removed in mature form.

This sequence belongs to the ephrin family. In terms of assembly, monomer. Homodimer. Forms heterodimers with EPHA2. Binds to the receptor tyrosine kinases EPHA2, EPHA3, EPHA4, EPHA5, EPHA6 and EPHA7. Also binds with low affinity to EPHA1. Post-translationally, undergoes proteolysis by a metalloprotease to give rise to a soluble monomeric form. N-Glycosylation is required for binding to EPHA2 receptor and inducing its internalization. Brain. Down-regulated in primary glioma tissues compared to the normal tissues. The soluble monomeric form is expressed in the glioblastoma multiforme (GBM) and breast cancer cells (at protein level).

The protein localises to the cell membrane. The protein resides in the secreted. Functionally, cell surface GPI-bound ligand for Eph receptors, a family of receptor tyrosine kinases which are crucial for migration, repulsion and adhesion during neuronal, vascular and epithelial development. Binds promiscuously Eph receptors residing on adjacent cells, leading to contact-dependent bidirectional signaling into neighboring cells. Plays an important role in angiogenesis and tumor neovascularization. The recruitment of VAV2, VAV3 and PI3-kinase p85 subunit by phosphorylated EPHA2 is critical for EFNA1-induced RAC1 GTPase activation and vascular endothelial cell migration and assembly. Exerts anti-oncogenic effects in tumor cells through activation and down-regulation of EPHA2. Activates EPHA2 by inducing tyrosine phosphorylation which leads to its internalization and degradation. Acts as a negative regulator in the tumorigenesis of gliomas by down-regulating EPHA2 and FAK. Can evoke collapse of embryonic neuronal growth cone and regulates dendritic spine morphogenesis. In Homo sapiens (Human), this protein is Ephrin-A1 (EFNA1).